Here is a 714-residue protein sequence, read N- to C-terminus: Fatty acid oxidation complex subunit alpha (714 aa).

Residues 1–190 (MEMASAFTLN…KLGLVDDVVP (190 aa)) form an enoyl-CoA hydratase region. The 3-hydroxyacyl-CoA dehydrogenase stretch occupies residues 306–714 (APLNSVGILG…FWKTTATDLQ (409 aa)).

The protein in the N-terminal section; belongs to the enoyl-CoA hydratase/isomerase family. In the central section; belongs to the 3-hydroxyacyl-CoA dehydrogenase family. Heterotetramer of two alpha chains (FadJ) and two beta chains (FadI).

It is found in the cytoplasm. The enzyme catalyses a (3S)-3-hydroxyacyl-CoA = a (2E)-enoyl-CoA + H2O. It carries out the reaction a 4-saturated-(3S)-3-hydroxyacyl-CoA = a (3E)-enoyl-CoA + H2O. It catalyses the reaction a (3S)-3-hydroxyacyl-CoA + NAD(+) = a 3-oxoacyl-CoA + NADH + H(+). The catalysed reaction is (3S)-3-hydroxybutanoyl-CoA = (3R)-3-hydroxybutanoyl-CoA. The protein operates within lipid metabolism; fatty acid beta-oxidation. In terms of biological role, catalyzes the formation of a hydroxyacyl-CoA by addition of water on enoyl-CoA. Also exhibits 3-hydroxyacyl-CoA epimerase and 3-hydroxyacyl-CoA dehydrogenase activities. In Escherichia coli O6:K15:H31 (strain 536 / UPEC), this protein is Fatty acid oxidation complex subunit alpha.